A 327-amino-acid polypeptide reads, in one-letter code: Phenylalanine--tRNA ligase alpha subunit (327 aa).

Glu-252 lines the Mg(2+) pocket.

The protein belongs to the class-II aminoacyl-tRNA synthetase family. Phe-tRNA synthetase alpha subunit type 1 subfamily. As to quaternary structure, tetramer of two alpha and two beta subunits. The cofactor is Mg(2+).

The protein resides in the cytoplasm. The catalysed reaction is tRNA(Phe) + L-phenylalanine + ATP = L-phenylalanyl-tRNA(Phe) + AMP + diphosphate + H(+). This Aliivibrio fischeri (strain ATCC 700601 / ES114) (Vibrio fischeri) protein is Phenylalanine--tRNA ligase alpha subunit.